Here is a 483-residue protein sequence, read N- to C-terminus: Sphingomyelin phosphodiesterase 5 (483 aa).

Residues 1 to 20 form a disordered region; it reads MSLPDISRRRSPVPQEDWPL. A helical membrane pass occupies residues 80–100; the sequence is VLLPLVVVGLPLALVGLALWL. Position 209 (glutamate 209) interacts with Mg(2+). Histidine 471 functions as the Proton acceptor in the catalytic mechanism.

Belongs to the neutral sphingomyelinase family. It depends on Mg(2+) as a cofactor. The cofactor is Mn(2+). Highly expressed in testis, pancreas, epididymis, and brain.

It localises to the mitochondrion inner membrane. It is found in the endoplasmic reticulum membrane. The enzyme catalyses a sphingomyelin + H2O = phosphocholine + an N-acylsphing-4-enine + H(+). It catalyses the reaction N-(hexadecanoyl)-sphing-4-enine-1-phosphocholine + H2O = N-hexadecanoylsphing-4-enine + phosphocholine + H(+). It functions in the pathway lipid metabolism; sphingolipid metabolism. With respect to regulation, activated by anionic phospholipids, specially cardiolipin and phosphatidylserine. In terms of biological role, catalyzes the hydrolysis of membrane sphingomyelin to form phosphorylcholine and ceramide. In Mus musculus (Mouse), this protein is Sphingomyelin phosphodiesterase 5.